The following is a 240-amino-acid chain: 1-(5-phosphoribosyl)-5-[(5-phosphoribosylamino)methylideneamino] imidazole-4-carboxamide isomerase (240 aa).

The Proton acceptor role is filled by Asp9. The active-site Proton donor is Asp131.

It belongs to the HisA/HisF family.

The protein localises to the cytoplasm. It catalyses the reaction 1-(5-phospho-beta-D-ribosyl)-5-[(5-phospho-beta-D-ribosylamino)methylideneamino]imidazole-4-carboxamide = 5-[(5-phospho-1-deoxy-D-ribulos-1-ylimino)methylamino]-1-(5-phospho-beta-D-ribosyl)imidazole-4-carboxamide. The protein operates within amino-acid biosynthesis; L-histidine biosynthesis; L-histidine from 5-phospho-alpha-D-ribose 1-diphosphate: step 4/9. The polypeptide is 1-(5-phosphoribosyl)-5-[(5-phosphoribosylamino)methylideneamino] imidazole-4-carboxamide isomerase (Cytophaga hutchinsonii (strain ATCC 33406 / DSM 1761 / CIP 103989 / NBRC 15051 / NCIMB 9469 / D465)).